A 608-amino-acid polypeptide reads, in one-letter code: UvrABC system protein C (608 aa).

The region spanning 16-94 is the GIY-YIG domain; the sequence is NRPGVYRMFD…IKEWRPPYNI (79 aa). The region spanning 204–239 is the UVR domain; the sequence is NALADELNVGMEQAAMRLDFEKAAELRDQVAILRRV.

It belongs to the UvrC family. In terms of assembly, interacts with UvrB in an incision complex.

Its subcellular location is the cytoplasm. Its function is as follows. The UvrABC repair system catalyzes the recognition and processing of DNA lesions. UvrC both incises the 5' and 3' sides of the lesion. The N-terminal half is responsible for the 3' incision and the C-terminal half is responsible for the 5' incision. The polypeptide is UvrABC system protein C (Pseudomonas aeruginosa (strain ATCC 15692 / DSM 22644 / CIP 104116 / JCM 14847 / LMG 12228 / 1C / PRS 101 / PAO1)).